The following is a 239-amino-acid chain: ATP-dependent dethiobiotin synthetase BioD (239 aa).

22–27 is an ATP binding site; that stretch reads GIGKTV. T26 is a binding site for Mg(2+). The active site involves K47. T51 contributes to the substrate binding site. Residues D59, 124–127, and 184–185 each bind ATP; these read EGVG and NR. Residues D59 and E124 each coordinate Mg(2+).

Belongs to the dethiobiotin synthetase family. As to quaternary structure, homodimer. Mg(2+) serves as cofactor.

The protein localises to the cytoplasm. It carries out the reaction (7R,8S)-7,8-diammoniononanoate + CO2 + ATP = (4R,5S)-dethiobiotin + ADP + phosphate + 3 H(+). The protein operates within cofactor biosynthesis; biotin biosynthesis; biotin from 7,8-diaminononanoate: step 1/2. In terms of biological role, catalyzes a mechanistically unusual reaction, the ATP-dependent insertion of CO2 between the N7 and N8 nitrogen atoms of 7,8-diaminopelargonic acid (DAPA, also called 7,8-diammoniononanoate) to form a ureido ring. This is ATP-dependent dethiobiotin synthetase BioD from Chlorobaculum tepidum (strain ATCC 49652 / DSM 12025 / NBRC 103806 / TLS) (Chlorobium tepidum).